The following is a 716-amino-acid chain: Fatty acid oxidation complex subunit alpha (716 aa).

The enoyl-CoA hydratase/isomerase stretch occupies residues 1–189; it reads MIYQSPTIQV…KVGAIDAVVA (189 aa). Asp-296 is a binding site for substrate. A 3-hydroxyacyl-CoA dehydrogenase region spans residues 311-716; that stretch reads QAVNSAAVLG…AATNGSYYPA (406 aa). Residues Met-324, Asp-343, 400–402, Lys-407, and Ser-429 each bind NAD(+); that span reads VVE. Residue His-450 is the For 3-hydroxyacyl-CoA dehydrogenase activity of the active site. Residue Asn-453 coordinates NAD(+). Substrate-binding residues include Asn-500 and Tyr-660.

It in the N-terminal section; belongs to the enoyl-CoA hydratase/isomerase family. The protein in the C-terminal section; belongs to the 3-hydroxyacyl-CoA dehydrogenase family. In terms of assembly, heterotetramer of two alpha chains (FadB) and two beta chains (FadA).

It carries out the reaction a (3S)-3-hydroxyacyl-CoA + NAD(+) = a 3-oxoacyl-CoA + NADH + H(+). The catalysed reaction is a (3S)-3-hydroxyacyl-CoA = a (2E)-enoyl-CoA + H2O. The enzyme catalyses a 4-saturated-(3S)-3-hydroxyacyl-CoA = a (3E)-enoyl-CoA + H2O. It catalyses the reaction (3S)-3-hydroxybutanoyl-CoA = (3R)-3-hydroxybutanoyl-CoA. It carries out the reaction a (3Z)-enoyl-CoA = a 4-saturated (2E)-enoyl-CoA. The catalysed reaction is a (3E)-enoyl-CoA = a 4-saturated (2E)-enoyl-CoA. The protein operates within lipid metabolism; fatty acid beta-oxidation. Functionally, involved in the aerobic and anaerobic degradation of long-chain fatty acids via beta-oxidation cycle. Catalyzes the formation of 3-oxoacyl-CoA from enoyl-CoA via L-3-hydroxyacyl-CoA. It can also use D-3-hydroxyacyl-CoA and cis-3-enoyl-CoA as substrate. This chain is Fatty acid oxidation complex subunit alpha, found in Shewanella loihica (strain ATCC BAA-1088 / PV-4).